The following is a 685-amino-acid chain: uncharacterized protein (685 aa).

Disordered regions lie at residues 78–220, 251–280, 296–332, and 459–657; these read AKQA…HIFD, TQNP…RNNE, DNNN…NNSE, and RNVK…NNKS. Residues 86-139 are a coiled coil; it reads KKKETENVEEEGEEKEKKIDDESFPDLLESTEKMKSELSKEKDKKKKQLKDGKK. Basic and acidic residues-rich tracts occupy residues 115–127 and 165–181; these read STEK…SKEK and FNDK…KKND. Residues 190–215 are compositionally biased toward low complexity; it reads NNQQNDMNNNNQNNQNNMNNNNNNNN. The segment covering 263–276 has biased composition (polar residues); that stretch reads LTNNQGENNIPTDN. The segment covering 297–307 has biased composition (low complexity); the sequence is NNNNNNNNNNN. Residues 308–331 show a composition bias toward polar residues; that stretch reads LGSAMNTPMNNMNKGGPRNNVNNS. Low complexity-rich tracts occupy residues 460–474 and 481–498; these read NVKN…GNTN and NNRG…NNFN. Positions 499-515 are enriched in basic and acidic residues; it reads RRNDKNDNRNFRRKDID. Polar residues predominate over residues 520 to 530; that stretch reads WRNTANPTQEE. Residues 531–590 are compositionally biased toward low complexity; that stretch reads NNNNMNHNNNYNNNNNNNNNNNNNNNNNNNTNHGKNFRNFNNLNNMKNNNSSNNKMMGMN. The span at 591–602 shows a compositional bias: polar residues; that stretch reads HMQQKGMNSSTG. The segment covering 617–656 has biased composition (low complexity); that stretch reads NNKMYKNNMGNANNNNNNNAVNTNFNNNNNNGNFHMNNNK.

This is an uncharacterized protein from Plasmodium falciparum (isolate 3D7).